The sequence spans 3530 residues: Unconventional myosin-XV (3530 aa).

Disordered stretches follow at residues 1 to 46, 615 to 710, and 730 to 1057; these read MAKE…RTPK, AGMD…PAHV, and EVPP…QKTL. Residues 663-681 show a composition bias toward pro residues; the sequence is PPVPPRPPSSGPPPAPPLS. 3 stretches are compositionally biased toward low complexity: residues 682–693, 753–763, and 823–835; these read PALSGLPRPASP, AAFGFPGASPR, and SPAP…RLGP. A compositionally biased stretch (pro residues) spans 836–850; sequence PGSPLPGSPRPPSPP. Over residues 859 to 869 the composition is skewed to low complexity; the sequence is RSSLNLPSRLP. The span at 903-913 shows a compositional bias: basic and acidic residues; the sequence is PLEHRESPREP. The span at 1027–1038 shows a compositional bias: pro residues; that stretch reads TKPPTPAPPKDV. Positions 1222–1899 constitute a Myosin motor domain; that stretch reads DGVEDMTQLE…LYQLLESMRE (678 aa). Residue 1315-1322 coordinates ATP; it reads GESGSGKT. Residues 1323–1350 are a coiled coil; it reads EATKLILRYLAAMNQKREVMQQIKILEA. Residues 1792 to 1799 are actin-binding; that stretch reads FMRCLKPN. The segment at 1888 to 2029 is neck or regulatory domain; sequence EHLYQLLESM…AQVPQVAPVR (142 aa). IQ domains lie at 1902–1924, 1925–1954, and 1955–1976; these read LNLA…RFRS, LRHK…SLVK, and FRSL…AEWR. The interval 2030–3530 is tail; the sequence is TPRLQAEPRV…TLPPSEITLL (1501 aa). Residues 2065–2217 enclose the MyTH4 1 domain; sequence MLTVPLRTPL…PTQLEWTATY (153 aa). Disordered stretches follow at residues 2311–2381, 2414–2446, 2490–2509, and 2644–2665; these read AASR…GEPA, YRMK…IPGL, AEKP…GPPA, and TSAP…LEPP. The span at 2349–2371 shows a compositional bias: polar residues; sequence GYSSHNQDGTNGETEAQRGTATH. A compositionally biased stretch (gly residues) spans 2417-2427; the sequence is KGGGQPGGGSS. The 87-residue stretch at 2867–2953 folds into the SH3 domain; the sequence is KDSDYVVAVR…PSELVQPAAA (87 aa). A MyTH4 2 domain is found at 3050–3204; it reads FTKTPLQESL…PSSIELRAML (155 aa). Residues 3209 to 3530 enclose the FERM domain; that stretch reads SKRQLFLLPG…TLPPSEITLL (322 aa).

Belongs to the TRAFAC class myosin-kinesin ATPase superfamily. Myosin family. In terms of assembly, interacts with the third PDZ domain of WHRN which is necessary for localization of WHRN to stereocilium tips. Interacts with EPS8. Interacts with FASLG. As to expression, highly expressed in pituitary. Also expressed at lower levels in adult brain, kidney, liver, lung, pancreas, placenta and skeletal muscle. Not expressed in brain. In the pituitary, highly expressed in anterior gland cells.

Its subcellular location is the cell projection. The protein resides in the stereocilium. It is found in the cytoplasm. It localises to the cytoskeleton. In terms of biological role, myosins are actin-based motor molecules with ATPase activity. Unconventional myosins serve in intracellular movements. Their highly divergent tails are presumed to bind to membranous compartments, which would be moved relative to actin filaments. Required for the arrangement of stereocilia in mature hair bundles. The chain is Unconventional myosin-XV (MYO15A) from Homo sapiens (Human).